A 657-amino-acid polypeptide reads, in one-letter code: 1-deoxy-D-xylulose-5-phosphate synthase (657 aa).

Residues H73 and 113-115 each bind thiamine diphosphate; that span reads SHA. Residue D145 coordinates Mg(2+). Residues 146–147, N175, Y293, and E375 each bind thiamine diphosphate; that span reads GA. N175 contributes to the Mg(2+) binding site.

The protein belongs to the transketolase family. DXPS subfamily. Homodimer. Mg(2+) is required as a cofactor. The cofactor is thiamine diphosphate.

It carries out the reaction D-glyceraldehyde 3-phosphate + pyruvate + H(+) = 1-deoxy-D-xylulose 5-phosphate + CO2. It participates in metabolic intermediate biosynthesis; 1-deoxy-D-xylulose 5-phosphate biosynthesis; 1-deoxy-D-xylulose 5-phosphate from D-glyceraldehyde 3-phosphate and pyruvate: step 1/1. Catalyzes the acyloin condensation reaction between C atoms 2 and 3 of pyruvate and glyceraldehyde 3-phosphate to yield 1-deoxy-D-xylulose-5-phosphate (DXP). This is 1-deoxy-D-xylulose-5-phosphate synthase from Paenarthrobacter aurescens (strain TC1).